Consider the following 313-residue polypeptide: Cytochrome c oxidase assembly protein COX18, mitochondrial (313 aa).

A helical membrane pass occupies residues 209–229; the sequence is SLPLDAAPMLIPIILGTVSMI. Over 230-272 the chain is Mitochondrial matrix; sequence NVEYNGKTMQATAVGTSGITTATDTQSRTSQTVNSILTATRLS. The chain crosses the membrane as a helical span at residues 273 to 293; sequence TIFLIGVSTQASVLLSLYWIT. The Mitochondrial intermembrane segment spans residues 294–313; it reads SQVYSLIQNRILDLLWPYQR.

This sequence belongs to the OXA1/ALB3/YidC family.

It localises to the mitochondrion inner membrane. Required for the insertion of integral membrane proteins into the mitochondrial inner membrane. Essential for the activity and assembly of cytochrome c oxidase. The chain is Cytochrome c oxidase assembly protein COX18, mitochondrial (COX18) from Kluyveromyces lactis (strain ATCC 8585 / CBS 2359 / DSM 70799 / NBRC 1267 / NRRL Y-1140 / WM37) (Yeast).